We begin with the raw amino-acid sequence, 361 residues long: Phenylalanine--tRNA ligase alpha subunit (361 aa).

Residue Glu260 participates in Mg(2+) binding.

This sequence belongs to the class-II aminoacyl-tRNA synthetase family. Phe-tRNA synthetase alpha subunit type 1 subfamily. As to quaternary structure, tetramer of two alpha and two beta subunits. Requires Mg(2+) as cofactor.

It is found in the cytoplasm. It carries out the reaction tRNA(Phe) + L-phenylalanine + ATP = L-phenylalanyl-tRNA(Phe) + AMP + diphosphate + H(+). This Bartonella bacilliformis (strain ATCC 35685 / KC583 / Herrer 020/F12,63) protein is Phenylalanine--tRNA ligase alpha subunit.